The following is a 309-amino-acid chain: UDP-N-acetylenolpyruvoylglucosamine reductase (309 aa).

An FAD-binding PCMH-type domain is found at 34 to 221 (RVGGPAQVLF…TAAREAAQPI (188 aa)). The active site involves arginine 179. The active-site Proton donor is the serine 228. Glutamate 298 is an active-site residue.

It belongs to the MurB family. FAD is required as a cofactor.

It is found in the cytoplasm. It catalyses the reaction UDP-N-acetyl-alpha-D-muramate + NADP(+) = UDP-N-acetyl-3-O-(1-carboxyvinyl)-alpha-D-glucosamine + NADPH + H(+). It participates in cell wall biogenesis; peptidoglycan biosynthesis. In terms of biological role, cell wall formation. This chain is UDP-N-acetylenolpyruvoylglucosamine reductase, found in Methylorubrum extorquens (strain PA1) (Methylobacterium extorquens).